A 587-amino-acid polypeptide reads, in one-letter code: Branchpoint-bridging protein (587 aa).

The span at 1–16 (MLNSRSVGSTGSNNTP) shows a compositional bias: polar residues. Disordered regions lie at residues 1-64 (MLNS…DGRG) and 121-142 (GDVVPHHRERSPSPPPQYDNHG). The segment covering 44–64 (DSYKSNSRMDHRPDGYHDGRG) has biased composition (basic and acidic residues). 2 positions are modified to phosphoserine: S131 and S133. Residues 191–271 (YVPVKDYPEI…DKINHAIKLI (81 aa)) enclose the KH domain. 2 CCHC-type zinc fingers span residues 309-326 (QVCQNCGNVGHRRFDCPE) and 334-351 (IVCRHCGSIGHIARDCPV). 2 disordered regions span residues 375–490 (GGGS…PGTS) and 551–587 (IPGATAPPGAPGSYNTSESSNLNAPPGVSMPNGYSNR). Polar residues predominate over residues 379-399 (AISNGNGEPQKSIEFSESGAA). Positions 410-454 (AAASTSVSSSTSSPAPWAKPASSAAPSNPAPWQQPAAPQSAPALS) are enriched in low complexity. Composition is skewed to polar residues over residues 465–483 (QPTQQSAVQPSNLVPSQNA) and 563–573 (SYNTSESSNLN).

It belongs to the BBP/SF1 family. As to quaternary structure, U2AF large subunit (u2af59), U2AF small subunit (u2af23) and bpb1 interact to form a complex required for complex A formation.

It localises to the cytoplasm. The protein resides in the nucleus. Functionally, necessary for the splicing of pre-mRNA. The BPB1(SF1)-u2af59-u2af23 complex has a role in the recognition of the branch site (5'-UACUAAC-3'), the pyrimidine tract and the 3'-splice site at the 3'-end of introns. The protein is Branchpoint-bridging protein (bpb1) of Schizosaccharomyces pombe (strain 972 / ATCC 24843) (Fission yeast).